We begin with the raw amino-acid sequence, 1078 residues long: Cell wall acid trehalase ATC1 (1078 aa).

The N-terminal stretch at 1–54 (MAANSSFFLADNCAPHNQSFIQFCIHAASKKKGRIALMCLANLFLLFSFHLLYA) is a signal peptide. Residues Asn-4, Asn-17, Asn-150, Asn-184, Asn-242, Asn-287, Asn-301, and Asn-350 are each glycosylated (N-linked (GlcNAc...) asparagine). 478–479 (WD) provides a ligand contact to substrate. Asn-532, Asn-591, and Asn-601 each carry an N-linked (GlcNAc...) asparagine glycan. The active-site Proton donor is Glu-607. 2 N-linked (GlcNAc...) asparagine glycosylation sites follow: Asn-661 and Asn-670. 676-677 (KQ) serves as a coordination point for substrate. N-linked (GlcNAc...) asparagine glycosylation is found at Asn-829, Asn-837, Asn-904, Asn-922, Asn-931, Asn-946, Asn-1003, and Asn-1037.

This sequence belongs to the glycosyl hydrolase 65 family.

Its subcellular location is the secreted. The protein resides in the cell wall. The catalysed reaction is alpha,alpha-trehalose + H2O = alpha-D-glucose + beta-D-glucose. Functionally, cell wall acid trehalase that catalyzes hydrolysis of the disaccharide trehalose and required for growth on trehalose as carbon source. Plays a role in dimorphic conversion and virulence. In Candida albicans (strain SC5314 / ATCC MYA-2876) (Yeast), this protein is Cell wall acid trehalase ATC1 (ATC1).